Reading from the N-terminus, the 329-residue chain is Acetyl-coenzyme A carboxylase carboxyl transferase subunit alpha (329 aa).

The CoA carboxyltransferase C-terminal domain occupies 40-294 (QLETLAARRR…REAIERHLDE (255 aa)).

Belongs to the AccA family. In terms of assembly, acetyl-CoA carboxylase is a heterohexamer composed of biotin carboxyl carrier protein (AccB), biotin carboxylase (AccC) and two subunits each of ACCase subunit alpha (AccA) and ACCase subunit beta (AccD).

Its subcellular location is the cytoplasm. It carries out the reaction N(6)-carboxybiotinyl-L-lysyl-[protein] + acetyl-CoA = N(6)-biotinyl-L-lysyl-[protein] + malonyl-CoA. It participates in lipid metabolism; malonyl-CoA biosynthesis; malonyl-CoA from acetyl-CoA: step 1/1. Component of the acetyl coenzyme A carboxylase (ACC) complex. First, biotin carboxylase catalyzes the carboxylation of biotin on its carrier protein (BCCP) and then the CO(2) group is transferred by the carboxyltransferase to acetyl-CoA to form malonyl-CoA. The polypeptide is Acetyl-coenzyme A carboxylase carboxyl transferase subunit alpha (Prochlorococcus marinus (strain MIT 9313)).